The chain runs to 377 residues: MSPTLKLALDLISRPSVTPEDAGCQDLMIERLKNIGFEIEYMPFGEVKNFYAKRGNSGPNLCFAGHTDVVPTGPEAEWKIPPFAPEIVDGVLYGRGAADMKGSLAAMVTAVENFVAKHPNHSGQISFLITSDEEGPFVDGTTRVVDALMERNEQVDWCIVGEPSSTKTLGDIIKNGRRGSFSGDLTVYGKQGHVAYPHLAENPIHLAAPALAEMASSHWDDGNDFFPPTSFQVSNIHSGTGATNVVPGKLNAQFNFRFSSELDFDALKVRVIEILDKHNLRYDIEWTYNGLPFLTRPGELVDAIVEAVQATVNITPELSTSGGTSDGRFIAKMGTQVVELGPINATIHQINECVDAESLNQLSEIYARILENLFAKK.

Residue histidine 66 participates in Zn(2+) binding. Aspartate 68 is an active-site residue. A Zn(2+)-binding site is contributed by aspartate 99. Glutamate 133 serves as the catalytic Proton acceptor. Positions 134, 162, and 348 each coordinate Zn(2+).

It belongs to the peptidase M20A family. DapE subfamily. As to quaternary structure, homodimer. Zn(2+) serves as cofactor. Requires Co(2+) as cofactor.

It carries out the reaction N-succinyl-(2S,6S)-2,6-diaminopimelate + H2O = (2S,6S)-2,6-diaminopimelate + succinate. Its pathway is amino-acid biosynthesis; L-lysine biosynthesis via DAP pathway; LL-2,6-diaminopimelate from (S)-tetrahydrodipicolinate (succinylase route): step 3/3. Catalyzes the hydrolysis of N-succinyl-L,L-diaminopimelic acid (SDAP), forming succinate and LL-2,6-diaminopimelate (DAP), an intermediate involved in the bacterial biosynthesis of lysine and meso-diaminopimelic acid, an essential component of bacterial cell walls. This Marinomonas sp. (strain MWYL1) protein is Succinyl-diaminopimelate desuccinylase.